We begin with the raw amino-acid sequence, 122 residues long: Large ribosomal subunit protein uL14 (122 aa).

Belongs to the universal ribosomal protein uL14 family. As to quaternary structure, part of the 50S ribosomal subunit. Forms a cluster with proteins L3 and L19. In the 70S ribosome, L14 and L19 interact and together make contacts with the 16S rRNA in bridges B5 and B8.

Binds to 23S rRNA. Forms part of two intersubunit bridges in the 70S ribosome. The polypeptide is Large ribosomal subunit protein uL14 (Rickettsia bellii (strain OSU 85-389)).